A 151-amino-acid chain; its full sequence is Cytochrome c-type biogenesis protein CcmE 2 (151 aa).

The Cytoplasmic portion of the chain corresponds to 1–8 (MNPLRKKR). Residues 9 to 29 (LVIILAILVGVGAAVGLALSA) form a helical; Signal-anchor for type II membrane protein membrane-spanning segment. Topologically, residues 30–151 (LQQNINLFYT…QSAPAPGKEG (122 aa)) are periplasmic. 2 residues coordinate heme: histidine 124 and tyrosine 128.

Belongs to the CcmE/CycJ family.

It localises to the cell inner membrane. Its function is as follows. Heme chaperone required for the biogenesis of c-type cytochromes. Transiently binds heme delivered by CcmC and transfers the heme to apo-cytochromes in a process facilitated by CcmF and CcmH. The chain is Cytochrome c-type biogenesis protein CcmE 2 from Pseudomonas fluorescens (strain Pf0-1).